The sequence spans 177 residues: Transcriptional regulator MET31 (177 aa).

The C2H2-type zinc-finger motif lies at 95 to 117 (YSCAKCQLKFSRSSDLRRHEKVH).

Interacts with MET4 and MET28.

It localises to the cytoplasm. The protein resides in the nucleus. In terms of biological role, auxiliary transcriptional regulator of sulfur amino acid metabolism. Involved in the transcriptional activation of MET28. The protein is Transcriptional regulator MET31 (MET31) of Saccharomyces cerevisiae (strain ATCC 204508 / S288c) (Baker's yeast).